The chain runs to 289 residues: S-methyl-5'-thioadenosine phosphorylase (289 aa).

Residues Ser-11, 53-54 (RH), and 86-87 (SA) each bind phosphate. Residue Met-187 participates in substrate binding. A phosphate-binding site is contributed by Thr-188. A substrate-binding site is contributed by 211–213 (DYD).

Belongs to the PNP/MTAP phosphorylase family. MTAP subfamily. As to quaternary structure, homohexamer. Dimer of a homotrimer.

The catalysed reaction is S-methyl-5'-thioadenosine + phosphate = 5-(methylsulfanyl)-alpha-D-ribose 1-phosphate + adenine. Its pathway is amino-acid biosynthesis; L-methionine biosynthesis via salvage pathway; S-methyl-5-thio-alpha-D-ribose 1-phosphate from S-methyl-5'-thioadenosine (phosphorylase route): step 1/1. Functionally, catalyzes the reversible phosphorylation of S-methyl-5'-thioadenosine (MTA) to adenine and 5-methylthioribose-1-phosphate. Involved in the breakdown of MTA, a major by-product of polyamine biosynthesis. Responsible for the first step in the methionine salvage pathway after MTA has been generated from S-adenosylmethionine. Has broad substrate specificity with 6-aminopurine nucleosides as preferred substrates. This is S-methyl-5'-thioadenosine phosphorylase from Thermosynechococcus vestitus (strain NIES-2133 / IAM M-273 / BP-1).